Here is a 175-residue protein sequence, read N- to C-terminus: Nucleoside diphosphate kinase 6 (175 aa).

ATP is bound by residues lysine 8, phenylalanine 57, arginine 85, threonine 91, arginine 105, and asparagine 115. The active-site Pros-phosphohistidine intermediate is histidine 118.

Belongs to the NDK family. It depends on Mg(2+) as a cofactor.

The catalysed reaction is a 2'-deoxyribonucleoside 5'-diphosphate + ATP = a 2'-deoxyribonucleoside 5'-triphosphate + ADP. It carries out the reaction a ribonucleoside 5'-diphosphate + ATP = a ribonucleoside 5'-triphosphate + ADP. Major role in the synthesis of nucleoside triphosphates other than ATP. The ATP gamma phosphate is transferred to the NDP beta phosphate via a ping-pong mechanism, using a phosphorylated active-site intermediate. This is Nucleoside diphosphate kinase 6 (Nme6) from Rattus norvegicus (Rat).